Consider the following 304-residue polypeptide: Porphobilinogen deaminase (304 aa).

S-(dipyrrolylmethanemethyl)cysteine is present on C240.

It belongs to the HMBS family. Monomer. Dipyrromethane is required as a cofactor.

The enzyme catalyses 4 porphobilinogen + H2O = hydroxymethylbilane + 4 NH4(+). Its pathway is porphyrin-containing compound metabolism; protoporphyrin-IX biosynthesis; coproporphyrinogen-III from 5-aminolevulinate: step 2/4. Tetrapolymerization of the monopyrrole PBG into the hydroxymethylbilane pre-uroporphyrinogen in several discrete steps. This is Porphobilinogen deaminase from Xanthomonas campestris pv. campestris (strain B100).